The sequence spans 499 residues: Apolipoprotein N-acyltransferase (499 aa).

Transmembrane regions (helical) follow at residues Val17–Leu37, Leu38–Leu58, Ala84–Leu104, Ile131–Gly151, Leu163–Leu183, and Arg198–Leu218. The region spanning Trp232–Phe458 is the CN hydrolase domain. The active-site Proton acceptor is Glu273. Lys322 is a catalytic residue. The active-site Nucleophile is Cys370. A helical transmembrane segment spans residues Ile474–Ile494.

The protein belongs to the CN hydrolase family. Apolipoprotein N-acyltransferase subfamily.

It localises to the cell inner membrane. It carries out the reaction N-terminal S-1,2-diacyl-sn-glyceryl-L-cysteinyl-[lipoprotein] + a glycerophospholipid = N-acyl-S-1,2-diacyl-sn-glyceryl-L-cysteinyl-[lipoprotein] + a 2-acyl-sn-glycero-3-phospholipid + H(+). Its pathway is protein modification; lipoprotein biosynthesis (N-acyl transfer). Catalyzes the phospholipid dependent N-acylation of the N-terminal cysteine of apolipoprotein, the last step in lipoprotein maturation. The polypeptide is Apolipoprotein N-acyltransferase (Prochlorococcus marinus (strain MIT 9313)).